The sequence spans 440 residues: MASETTEARAPFQPDGAYGWRCPEHSERPAELFCRRCGRCVCALCPVLGAHRGHPVGLAEEEAVRVQKLIQDCLECLATKKRQHADNIAHLEDAGERLKVYADSSKAWLTQKFTELRLLLDEEEVLAKKFIDKSTQLTLQVYREQAETCGKQIEVMDDFSTRVWGIGQEPNPVQLLQAYIATKTEMGQQMSPSELSHPVPLSFEPVKNFFKEFVEAIGNTLQTPMDTRLKENINCQLSNSSSTKPGALLKTSPSPERALFLKYARTPTLDPDTMHARLRLSPDGLTVRCSLLGRLGPRPAPRFDALRQVLGRDGFAAGRHYWEVDVQEAGVGWWVGAAYPSLRRRGASAAARLGCNRESWCVKRYDLEYWAFHDGQRSRLRPRRDPHRLGVFLDYEAGILAFYDVAGGMSHLHTFHAAFQEPLYPALRLWEGPISIPRLP.

The segment at 17–59 (AYGWRCPEHSERPAELFCRRCGRCVCALCPVLGAHRGHPVGLA) adopts a B box-type zinc-finger fold. Zn(2+)-binding residues include Cys22, His25, Cys45, and His51. Residues 247–440 (ALLKTSPSPE…EGPISIPRLP (194 aa)) enclose the B30.2/SPRY domain.

The protein belongs to the TRIM/RBCC family. As to quaternary structure, interacts with MAVS. Interacts with WRNIP1 and PPP6C; these interactions positively regulate the RIG-I signaling pathway. Interacts with CGAS; this interaction stabilizes CGAS and promotes type I interferon production. Interacts with USP14; this interaction mediates the cleavage of 'Lys-48'-linked ubiquitination of CGAS. Interacts with TBK1. Interacts with SPI1. Interacts with KDM4D and USP14. Post-translationally, ubiquitinated. Undergoes 'Lys-63'-linked polyubiquitination; this modification allows IKBKG/NEMO recruitment to MAVS. Undergoes 'Lys-48'-linked polyubiquitination by RNF125; this modification mediates its degradation via the ubiquitin-proteasome pathway. As to expression, expressed with high level in spleen, thymus, liver and testis. Expressed with low level in the brain, kidney, and skeletal muscle. Expressed in various differentiation stages of B-lymphocytes.

The protein localises to the mitochondrion outer membrane. It localises to the cytoplasmic vesicle. Its subcellular location is the phagosome. Plays a role in the innate immune defense against viruses. Facilitates the type I IFN response by interacting with MAVS at the outer mitochondria membrane and thereby recruiting NF-kappa-B essential modulator IKBKG/NEMO to the MAVS signalosome, leading to the activation of both the IFN regulatory factor 3/IRF3 and NF-kappa-B pathways. Positively regulates the CGAS-induced type I interferon signaling pathway by stabilizing CGAS and inhibiting its autophagic degradation. Inhibits the transcriptional activity of SPI1 in a dose-dependent manner. Also inhibits OPTN-mediated selective autophagic degradation of KDM4D and thereby negatively regulates H3K9me2 and H3K9me3. Mechanistically, recruits USP14 to remove the 'Lys-63'-linked ubiquitination of KDM4D, preventing its recognition by OPTN and subsequent degradation. In terms of biological role, plays an essential role in the innate immune defense against viruses and bacteria. Facilitates the type I IFN response by interacting with MAVS at the outer mitochondria membrane and thereby recruiting NF-kappa-B essential modulator IKBKG/NEMO to the MAVS signalosome, leading to the activation of both the IFN regulatory factor 3/IRF3 and NF-kappa-B pathways. Positively regulates the CGAS-induced type I interferon signaling pathway by stabilizing CGAS and inhibiting its autophagic degradation. Acts as a scaffold between TBK1 and STAT3 to promote phosphorylation of STAT3 and resolve interferon-stimulated gene (ISG) expression. Inhibits the transcriptional activity of SPI1 in a dose-dependent manner. The chain is Tripartite motif-containing protein 14 (Trim14) from Mus musculus (Mouse).